Reading from the N-terminus, the 348-residue chain is tRNA pseudouridine synthase D (348 aa).

Aspartate 84 serves as the catalytic Nucleophile. A TRUD domain is found at 162 to 308; that stretch reads GVPNYFGPQR…ARMDRRPLCL (147 aa).

The protein belongs to the pseudouridine synthase TruD family.

The catalysed reaction is uridine(13) in tRNA = pseudouridine(13) in tRNA. Responsible for synthesis of pseudouridine from uracil-13 in transfer RNAs. The chain is tRNA pseudouridine synthase D from Chromohalobacter salexigens (strain ATCC BAA-138 / DSM 3043 / CIP 106854 / NCIMB 13768 / 1H11).